Reading from the N-terminus, the 224-residue chain is Putative adhesin A1G_07050 (224 aa).

A signal peptide spans 1–22; that stretch reads MKKLLLIAATSATILSSSVSFA.

This Rickettsia rickettsii (strain Sheila Smith) protein is Putative adhesin A1G_07050.